Here is a 168-residue protein sequence, read N- to C-terminus: 3'-5' exoribonuclease MT2234.1 (168 aa).

Aspartate 6 provides a ligand contact to Mg(2+). The segment at 6 to 9 (DTEF) is RNA binding.

As to quaternary structure, homodimer. Requires Mg(2+) as cofactor.

Functionally, exonuclease that cleaves single-stranded 3' overhangs of double-stranded RNA. In Mycobacterium tuberculosis (strain CDC 1551 / Oshkosh), this protein is 3'-5' exoribonuclease MT2234.1.